We begin with the raw amino-acid sequence, 743 residues long: Amylovoran biosynthesis protein AmsF (743 aa).

The first 27 residues, 1 to 27 (MKRRELIRTAFSTIVATAALSSVSARA), serve as a signal peptide directing secretion.

It to R.meliloti ExoP.

The protein localises to the periplasm. The protein operates within glycan metabolism; exopolysaccharide biosynthesis. Functionally, involved in the biosynthesis of amylovoran which functions as a virulence factor. May be involved in the polymerization or late modification of the repeating units. In Erwinia amylovora (Fire blight bacteria), this protein is Amylovoran biosynthesis protein AmsF (amsF).